The chain runs to 349 residues: Flap endonuclease 1 (349 aa).

An N-domain region spans residues methionine 1–lysine 98. Residues aspartate 27, aspartate 80, glutamate 152, glutamate 154, aspartate 173, aspartate 175, and aspartate 236 each coordinate Mg(2+). The interval glutamate 116–glycine 258 is I-domain. An interaction with PCNA region spans residues arginine 341 to phenylalanine 349.

The protein belongs to the XPG/RAD2 endonuclease family. FEN1 subfamily. As to quaternary structure, interacts with PCNA via subunit PCNA1. The cofactor is Mg(2+).

Its activity is regulated as follows. Heterotrimeric PCNA stimulates the nuclease activity without altering cleavage specificity. Functionally, structure-specific nuclease with 5'-flap endonuclease and 5'-3' exonuclease activities involved in DNA replication and repair. During DNA replication, cleaves the 5'-overhanging flap structure that is generated by displacement synthesis when DNA polymerase encounters the 5'-end of a downstream Okazaki fragment. Binds the unpaired 3'-DNA end and kinks the DNA to facilitate 5' cleavage specificity. Cleaves one nucleotide into the double-stranded DNA from the junction in flap DNA, leaving a nick for ligation. Also involved in the base excision repair (BER) pathway. Acts as a genome stabilization factor that prevents flaps from equilibrating into structures that lead to duplications and deletions. Also possesses 5'-3' exonuclease activity on nicked or gapped double-stranded DNA. DNA polymerase I, DNA ligase and the flap endonuclease may be constitutively associated with the PCNA heterotrimer forming a scanning complex able to couple DNA synthesis and Okazaki fragment maturation. This Saccharolobus solfataricus (strain ATCC 35092 / DSM 1617 / JCM 11322 / P2) (Sulfolobus solfataricus) protein is Flap endonuclease 1.